The following is a 156-amino-acid chain: Ribosomal RNA large subunit methyltransferase H (156 aa).

S-adenosyl-L-methionine contacts are provided by residues Leu-73, Gly-104, and 123-128; that span reads LSALTM.

It belongs to the RNA methyltransferase RlmH family. In terms of assembly, homodimer.

It is found in the cytoplasm. The catalysed reaction is pseudouridine(1915) in 23S rRNA + S-adenosyl-L-methionine = N(3)-methylpseudouridine(1915) in 23S rRNA + S-adenosyl-L-homocysteine + H(+). Specifically methylates the pseudouridine at position 1915 (m3Psi1915) in 23S rRNA. In Tolumonas auensis (strain DSM 9187 / NBRC 110442 / TA 4), this protein is Ribosomal RNA large subunit methyltransferase H.